Reading from the N-terminus, the 577-residue chain is Sensory neuron membrane protein 2 (577 aa).

Residues 1–6 (MVQCTL) lie on the Cytoplasmic side of the membrane. Residues 7 to 27 (IWAGIGAMMAVSGALLGWVVF) form a helical membrane-spanning segment. Topologically, residues 28 to 519 (PRAVHEKVIE…LMKVLSLLDV (492 aa)) are extracellular. 4 N-linked (GlcNAc...) asparagine glycosylation sites follow: asparagine 66, asparagine 161, asparagine 271, and asparagine 307. 3 disulfides stabilise this stretch: cysteine 316/cysteine 384, cysteine 345/cysteine 411, and cysteine 386/cysteine 400. The helical transmembrane segment at 520-540 (VQWVLIGVGLLLAVLMPTVYF) threads the bilayer. Residues 541–577 (VKRCRGEGSRTVSPAVTATTSAASLSTVAGVTGDRSK) are Cytoplasmic-facing.

It belongs to the CD36 family.

It localises to the cell membrane. In terms of biological role, plays an olfactory role that is not restricted to pheromone sensitivity. This Anopheles gambiae (African malaria mosquito) protein is Sensory neuron membrane protein 2.